Here is a 337-residue protein sequence, read N- to C-terminus: Glyceraldehyde-3-phosphate dehydrogenase (337 aa).

Residues 12–13 (RI), Asp-36, Arg-80, and Ser-122 contribute to the NAD(+) site. Residues 153 to 155 (SCT) and Thr-184 contribute to the D-glyceraldehyde 3-phosphate site. Cys-154 (nucleophile) is an active-site residue. An NAD(+)-binding site is contributed by Asn-185. D-glyceraldehyde 3-phosphate is bound by residues Arg-199, 212–213 (TG), and Arg-235. Asn-318 is a binding site for NAD(+).

The protein belongs to the glyceraldehyde-3-phosphate dehydrogenase family. In terms of assembly, homotetramer.

Its subcellular location is the cytoplasm. The catalysed reaction is D-glyceraldehyde 3-phosphate + phosphate + NAD(+) = (2R)-3-phospho-glyceroyl phosphate + NADH + H(+). It participates in carbohydrate degradation; glycolysis; pyruvate from D-glyceraldehyde 3-phosphate: step 1/5. Functionally, catalyzes the oxidative phosphorylation of glyceraldehyde 3-phosphate (G3P) to 1,3-bisphosphoglycerate (BPG) using the cofactor NAD. The first reaction step involves the formation of a hemiacetal intermediate between G3P and a cysteine residue, and this hemiacetal intermediate is then oxidized to a thioester, with concomitant reduction of NAD to NADH. The reduced NADH is then exchanged with the second NAD, and the thioester is attacked by a nucleophilic inorganic phosphate to produce BPG. The protein is Glyceraldehyde-3-phosphate dehydrogenase (gap) of Zymomonas mobilis subsp. mobilis (strain ATCC 31821 / ZM4 / CP4).